The primary structure comprises 356 residues: 5-formaminoimidazole-4-carboxamide-1-(beta)-D-ribofuranosyl 5'-monophosphate synthetase 2 (356 aa).

Positions 27 and 94 each coordinate 5-amino-1-(5-phospho-beta-D-ribosyl)imidazole-4-carboxamide. In terms of domain architecture, ATP-grasp spans 101 to 333 (RENFTGMAVP…YSDLMQKRLS (233 aa)). ATP contacts are provided by residues 145-196 (PHDI…TRYD) and Glu-226. Asn-255 is a binding site for 5-amino-1-(5-phospho-beta-D-ribosyl)imidazole-4-carboxamide. Mg(2+) is bound by residues Glu-293 and Glu-306.

It belongs to the phosphohexose mutase family. Mg(2+) serves as cofactor. The cofactor is Mn(2+).

It catalyses the reaction 5-amino-1-(5-phospho-beta-D-ribosyl)imidazole-4-carboxamide + formate + ATP = 5-formamido-1-(5-phospho-D-ribosyl)imidazole-4-carboxamide + ADP + phosphate. It functions in the pathway purine metabolism; IMP biosynthesis via de novo pathway; 5-formamido-1-(5-phospho-D-ribosyl)imidazole-4-carboxamide from 5-amino-1-(5-phospho-D-ribosyl)imidazole-4-carboxamide (formate route): step 1/1. Its function is as follows. Catalyzes the ATP- and formate-dependent formylation of 5-aminoimidazole-4-carboxamide-1-beta-d-ribofuranosyl 5'-monophosphate (AICAR) to 5-formaminoimidazole-4-carboxamide-1-beta-d-ribofuranosyl 5'-monophosphate (FAICAR) in the absence of folates. The protein is 5-formaminoimidazole-4-carboxamide-1-(beta)-D-ribofuranosyl 5'-monophosphate synthetase 2 of Methanosarcina mazei (strain ATCC BAA-159 / DSM 3647 / Goe1 / Go1 / JCM 11833 / OCM 88) (Methanosarcina frisia).